Reading from the N-terminus, the 283-residue chain is Elongation factor Ts (283 aa).

Positions 80–83 (TDFV) are involved in Mg(2+) ion dislocation from EF-Tu.

This sequence belongs to the EF-Ts family.

The protein resides in the cytoplasm. Its function is as follows. Associates with the EF-Tu.GDP complex and induces the exchange of GDP to GTP. It remains bound to the aminoacyl-tRNA.EF-Tu.GTP complex up to the GTP hydrolysis stage on the ribosome. The polypeptide is Elongation factor Ts (Actinobacillus pleuropneumoniae serotype 5b (strain L20)).